We begin with the raw amino-acid sequence, 63 residues long: Large ribosomal subunit protein bL28 (63 aa).

This sequence belongs to the bacterial ribosomal protein bL28 family.

The chain is Large ribosomal subunit protein bL28 from Acidobacterium capsulatum (strain ATCC 51196 / DSM 11244 / BCRC 80197 / JCM 7670 / NBRC 15755 / NCIMB 13165 / 161).